Consider the following 541-residue polypeptide: Probable elastin-binding protein EbpS (541 aa).

Composition is skewed to basic and acidic residues over residues 1-25 (MSNN…HQEN), 35-49 (DNIK…DEQF), and 61-108 (RDTA…KESN). 2 disordered regions span residues 1–322 (MSNN…KKGG) and 346–493 (MALT…GQRT). Residues 109–126 (DPSQNNNLIHESSNNQQS) are compositionally biased toward polar residues. Over residues 127-145 (ENRHDINNEKDQSDKDSNN) the composition is skewed to basic and acidic residues. Over residues 146–165 (KKGAVIASSGAAGVGAYAAS) the composition is skewed to low complexity. A compositionally biased stretch (basic and acidic residues) spans 166–182 (KHNDAASSSKDHNDKAH). Over residues 183-198 (QQNQDWEQSNQTNDST) the composition is skewed to polar residues. A compositionally biased stretch (low complexity) spans 215–231 (AAVAGGAAAAGAGAYAA). Positions 239–260 (DKNDNEPEQNESKSDVKNEEKH) are enriched in basic and acidic residues. The segment covering 267–290 (AAVAGGAAAAGTGAAAASHSKSST) has biased composition (low complexity). A compositionally biased stretch (gly residues) spans 291–305 (GNGGNGNGGNGGNGN). The segment covering 309–318 (NNHDSEDNNK) has biased composition (basic and acidic residues). The helical transmembrane segment at 327 to 347 (LLPIIAAILILAAIGIFGGMA) threads the bilayer. Basic and acidic residues predominate over residues 352-396 (NDDKGSDDDKKVADNKDKDSDKAKDADSDKDSKSDKDKDKAKDDD). Over residues 398–491 (NQATTDSDSS…NQSSNSNSGQ (94 aa)) the composition is skewed to low complexity. The LysM domain maps to 491–539 (QRTHVVNGQNLYRIAIQYYGEGTPENVEKIREANNIQGNDIHNGQRLVI).

The protein resides in the cell membrane. This is Probable elastin-binding protein EbpS (ebpS) from Staphylococcus saprophyticus subsp. saprophyticus (strain ATCC 15305 / DSM 20229 / NCIMB 8711 / NCTC 7292 / S-41).